Reading from the N-terminus, the 446-residue chain is Histone acetyltransferase ESA1 (446 aa).

One can recognise a Tudor-knot domain in the interval 24 to 75; that stretch reads IKCQCWVRKDEEERLAEILSINARVSPSKFYVHYVNFNKRLDEWVTGDRINL. A disordered region spans residues 86-121; the sequence is RQLEEDTNKKQKKKKKFPQKAAVVESDAKSSEMGEG. The MYST-type HAT domain maps to 163–434; the sequence is AHVRNLSKII…IDAEKLLWKP (272 aa). The C2HC MYST-type; degenerate zinc finger occupies 196-221; that stretch reads VYIDDFTLQYFGSRKQYERYRKKCTL. Positions 246 to 267 match the ESA1-RPD3 motif motif; it reads RTWCRNLCLLSKLFLDHKTLYY. The residue at position 263 (K263) is an N6-acetyllysine; by autocatalysis. Acetyl-CoA contacts are provided by residues 304-308 and 313-319; these read ACILT and QRMGYGR. E339 serves as the catalytic Proton donor/acceptor. Residue S343 coordinates acetyl-CoA.

This sequence belongs to the MYST (SAS/MOZ) family. As to quaternary structure, component of the NuA4 histone acetyltransferase complex. In terms of processing, autoacetylation at Lys-263 is required for proper function.

Its subcellular location is the nucleus. The protein resides in the chromosome. It catalyses the reaction L-lysyl-[histone] + acetyl-CoA = N(6)-acetyl-L-lysyl-[histone] + CoA + H(+). The catalysed reaction is L-lysyl-[protein] + acetyl-CoA = N(6)-acetyl-L-lysyl-[protein] + CoA + H(+). It carries out the reaction 2-hydroxyisobutanoyl-CoA + L-lysyl-[protein] = N(6)-(2-hydroxyisobutanoyl)-L-lysyl-[protein] + CoA + H(+). The enzyme catalyses (2E)-butenoyl-CoA + L-lysyl-[protein] = N(6)-(2E)-butenoyl-L-lysyl-[protein] + CoA + H(+). Its function is as follows. Catalytic component of the NuA4 histone acetyltransferase (HAT) complex which is involved in epigenetic transcriptional activation of selected genes principally by acetylation of nucleosomal histones H4, H3, H2B, H2A and H2A variant H2A.Z. Acetylates histone H4 to form H4K5ac, H4K8ac, H4K12ac and H4K16ac, histone H3 to form H3K14ac, and histone H2A to form H2AK4ac and H2AK7ac. The NuA4 complex is involved in the DNA damage response and is required for chromosome segregation. The NuA4 complex plays a direct role in repair of DNA double-strand breaks (DSBs) through homologous recombination. Recruitment to promoters depends on H3K4me. Also acetylates non-histone proteins. In addition to protein acetyltransferase, can use different acyl-CoA substrates, such as 2-hydroxyisobutanoyl-CoA (2-hydroxyisobutyryl-CoA) or (2E)-butenoyl-CoA (crotonyl-CoA), and is able to mediate protein 2-hydroxyisobutyrylation and crotonylation, respectively. In Candida glabrata (strain ATCC 2001 / BCRC 20586 / JCM 3761 / NBRC 0622 / NRRL Y-65 / CBS 138) (Yeast), this protein is Histone acetyltransferase ESA1 (ESA1).